A 475-amino-acid chain; its full sequence is Divinyl ether synthase CYP74M1 (475 aa).

A heme-binding site is contributed by C427.

It belongs to the cytochrome P450 family. The cofactor is heme.

The enzyme catalyses (13S)-hydroperoxy-(9Z,11E)-octadecadienoate = etheroleate + H2O. It carries out the reaction (13S)-hydroperoxy-(9Z,11E,15Z)-octadecatrienoate = etherolenate + H2O. It functions in the pathway lipid metabolism; oxylipin biosynthesis. In terms of biological role, divinyl ether synthase involved in oxylipin biosynthesis. Catalyzes the conversion of (13S)-hydroperoxy-(9Z,11E)-octadecadienoate (13-HPOD) to etheroleate and (13S)-hydroperoxy-(9Z,11E,15Z)-octadecatrienoate (13-HPOT) to etherolenate. Has no activity with the corresponding 9-hydroperoxides (9-HPOD and 9-HPOT). The sequence is that of Divinyl ether synthase CYP74M1 from Selaginella moellendorffii (Spikemoss).